The sequence spans 377 residues: Homoserine O-succinyltransferase (377 aa).

In terms of domain architecture, AB hydrolase-1 spans 50–358 (NAVLICHALS…PSSYGHDSFL (309 aa)). Catalysis depends on serine 156, which acts as the Nucleophile. Arginine 226 serves as a coordination point for substrate. Active-site residues include aspartate 321 and histidine 354. Aspartate 355 provides a ligand contact to substrate.

This sequence belongs to the AB hydrolase superfamily. MetX family. As to quaternary structure, homodimer.

The protein resides in the cytoplasm. The catalysed reaction is L-homoserine + succinyl-CoA = O-succinyl-L-homoserine + CoA. It functions in the pathway amino-acid biosynthesis; L-methionine biosynthesis via de novo pathway; O-succinyl-L-homoserine from L-homoserine: step 1/1. Functionally, transfers a succinyl group from succinyl-CoA to L-homoserine, forming succinyl-L-homoserine. The protein is Homoserine O-succinyltransferase of Nitrosomonas europaea (strain ATCC 19718 / CIP 103999 / KCTC 2705 / NBRC 14298).